The chain runs to 353 residues: DNA-directed RNA polymerase subunit alpha (353 aa).

Residues 1–226 (MLISQRPTLT…ELFGLARELN (226 aa)) are alpha N-terminal domain (alpha-NTD). Residues 241 to 353 (ADHIASFGLP…TEDYAETEQL (113 aa)) form an alpha C-terminal domain (alpha-CTD) region. The tract at residues 326–353 (ATGTWSDTDAGSFGDAEGTEDYAETEQL) is disordered. The span at 342-353 (EGTEDYAETEQL) shows a compositional bias: acidic residues.

This sequence belongs to the RNA polymerase alpha chain family. In terms of assembly, homodimer. The RNAP catalytic core consists of 2 alpha, 1 beta, 1 beta' and 1 omega subunit. When a sigma factor is associated with the core the holoenzyme is formed, which can initiate transcription.

The catalysed reaction is RNA(n) + a ribonucleoside 5'-triphosphate = RNA(n+1) + diphosphate. Its function is as follows. DNA-dependent RNA polymerase catalyzes the transcription of DNA into RNA using the four ribonucleoside triphosphates as substrates. The polypeptide is DNA-directed RNA polymerase subunit alpha (Rhodococcus jostii (strain RHA1)).